The sequence spans 590 residues: Phenylalanine--tRNA ligase beta subunit (590 aa).

The 107-residue stretch at 276-382 folds into the B5 domain; it reads MELDVWDVPV…IMYNYDRFEP (107 aa). Asn-360, Asp-366, Glu-369, and Asp-370 together coordinate Mg(2+).

Belongs to the phenylalanyl-tRNA synthetase beta subunit family. Type 2 subfamily. In terms of assembly, tetramer of two alpha and two beta subunits. Mg(2+) serves as cofactor.

It localises to the cytoplasm. The catalysed reaction is tRNA(Phe) + L-phenylalanine + ATP = L-phenylalanyl-tRNA(Phe) + AMP + diphosphate + H(+). The protein is Phenylalanine--tRNA ligase beta subunit of Methanopyrus kandleri (strain AV19 / DSM 6324 / JCM 9639 / NBRC 100938).